The following is a 20-amino-acid chain: Brevinin-1T (20 aa).

A disulfide bridge connects residues cysteine 14 and cysteine 20.

Belongs to the frog skin active peptide (FSAP) family. Brevinin subfamily. As to expression, expressed by the skin glands.

The protein resides in the secreted. Antibacterial activity against representative Gram-negative and Gram-positive bacteria and exhibits a very high hemolytic activity. This chain is Brevinin-1T, found in Rana temporaria (European common frog).